The primary structure comprises 122 residues: Large ribosomal subunit protein uL14 (122 aa).

It belongs to the universal ribosomal protein uL14 family. In terms of assembly, part of the 50S ribosomal subunit. Forms a cluster with proteins L3 and L19. In the 70S ribosome, L14 and L19 interact and together make contacts with the 16S rRNA in bridges B5 and B8.

In terms of biological role, binds to 23S rRNA. Forms part of two intersubunit bridges in the 70S ribosome. The protein is Large ribosomal subunit protein uL14 of Wolinella succinogenes (strain ATCC 29543 / DSM 1740 / CCUG 13145 / JCM 31913 / LMG 7466 / NCTC 11488 / FDC 602W) (Vibrio succinogenes).